The primary structure comprises 128 residues: Small ribosomal subunit protein eS8 (128 aa).

The interval Met-1–Asp-41 is disordered.

This sequence belongs to the eukaryotic ribosomal protein eS8 family. Part of the 30S ribosomal subunit.

The polypeptide is Small ribosomal subunit protein eS8 (Sulfolobus acidocaldarius (strain ATCC 33909 / DSM 639 / JCM 8929 / NBRC 15157 / NCIMB 11770)).